A 424-amino-acid polypeptide reads, in one-letter code: Arogenate dehydratase 4, chloroplastic (424 aa).

A chloroplast-targeting transit peptide spans 1 to 34 (MQAATSCDLKFRSTDPTSRNKCFSHAIPKRVAVT). The Prephenate dehydratase domain occupies 126–303 (RVAYQGVPGA…NVTRFLMLAR (178 aa)). The 92-residue stretch at 319–410 (VFAAQEHKGT…SFLRVLGSYP (92 aa)) folds into the ACT domain.

Expressed in roots, leaves, stems, flowers and siliques. More abundant in stems and roots.

The protein resides in the plastid. Its subcellular location is the chloroplast stroma. It catalyses the reaction L-arogenate + H(+) = L-phenylalanine + CO2 + H2O. The protein operates within amino-acid biosynthesis; L-phenylalanine biosynthesis; L-phenylalanine from L-arogenate: step 1/1. Converts the prephenate produced from the shikimate-chorismate pathway into phenylalanine. The sequence is that of Arogenate dehydratase 4, chloroplastic from Arabidopsis thaliana (Mouse-ear cress).